The sequence spans 424 residues: Zygote arrest protein 1 (424 aa).

2 disordered regions span residues 125 to 175 (RTLQ…PMRF) and 196 to 313 (GPGP…SPEL). The span at 141–150 (GAEGTTGGGS) shows a compositional bias: gly residues. The segment covering 289–298 (RARDGGDGRE) has biased composition (basic and acidic residues). A 3CxxC-type zinc finger spans residues 326–409 (KYGYYHCKDC…RQDLCGRCKG (84 aa)).

This sequence belongs to the ZAR1 family. In terms of assembly, interacts with YBX2. In terms of processing, ubiquitinated and degradaded by the proteasome during oocyte meiotic maturation, leading to MARDO (mitochondria-associated ribonucleoprotein domain) membraneless compartment dissolution. In terms of tissue distribution, ovary and testis.

It localises to the cytoplasm. Its subcellular location is the cytoplasmic ribonucleoprotein granule. MRNA-binding protein that mediates formation of MARDO (mitochondria-associated ribonucleoprotein domain), a membraneless compartment that stores maternal mRNAs in oocytes. MARDO assembly around mitochondria is directed by an increase in mitochondrial membrane potential during oocyte growth. Promotes formation of MARDO phase-separated membraneless compartment by undergoing liquid-liquid phase separation upon binding to maternal mRNAs. Binds to the 3'-UTR of maternal mRNAs. Maternal mRNAs stored in the MARDO are translationally repressed. Essential for female fertility and oocyte-to-embryo transition by coordinating maternal mRNA storage, translation and degradation. The chain is Zygote arrest protein 1 from Homo sapiens (Human).